We begin with the raw amino-acid sequence, 123 residues long: Small ribosomal subunit protein uS12 (123 aa).

Position 89 is a 3-methylthioaspartic acid (aspartate 89).

Belongs to the universal ribosomal protein uS12 family. As to quaternary structure, part of the 30S ribosomal subunit. Contacts proteins S8 and S17. May interact with IF1 in the 30S initiation complex.

Functionally, with S4 and S5 plays an important role in translational accuracy. Its function is as follows. Interacts with and stabilizes bases of the 16S rRNA that are involved in tRNA selection in the A site and with the mRNA backbone. Located at the interface of the 30S and 50S subunits, it traverses the body of the 30S subunit contacting proteins on the other side and probably holding the rRNA structure together. The combined cluster of proteins S8, S12 and S17 appears to hold together the shoulder and platform of the 30S subunit. In Methylobacterium sp. (strain 4-46), this protein is Small ribosomal subunit protein uS12.